A 155-amino-acid polypeptide reads, in one-letter code: Small ribosomal subunit protein uS7c (155 aa).

This sequence belongs to the universal ribosomal protein uS7 family. As to quaternary structure, part of the 30S ribosomal subunit.

It is found in the plastid. Its subcellular location is the chloroplast. Functionally, one of the primary rRNA binding proteins, it binds directly to 16S rRNA where it nucleates assembly of the head domain of the 30S subunit. The sequence is that of Small ribosomal subunit protein uS7c (rps7) from Staurastrum punctulatum (Green alga).